The sequence spans 367 residues: Protein SGT1 homolog (367 aa).

3 TPR repeats span residues 6-39 (ASDLESKAKAAFVDDDFELAAELYTQAIEASPAT), 40-73 (AELYADRAQAHIKLGNYTEAVADANKAIELDPSM), and 75-107 (KAYLRKGAACIRLEEYQTAKAALELGYSFASGD). The region spanning 165-254 (KPKYRHDFYN…AEQITWTSLD (90 aa)) is the CS domain. 2 disordered regions span residues 261–289 (AVPQKIIPPAESAQRPSYPSSKSKKDWDK) and 347–367 (VGSKKVEGSPPDGMELKKWEY). The region spanning 277–367 (SYPSSKSKKD…DGMELKKWEY (91 aa)) is the SGS domain.

The protein belongs to the SGT1 family. Interacts (via CS domain) with RAR1 (via CHORD 2 domain). Interacts with RAD6. In terms of tissue distribution, expressed in roots, root tips, shoot apical meristem (SAM), young leaves, flag leaves and ears.

The protein localises to the cytoplasm. It is found in the nucleus. In terms of biological role, involved in basal disease resistance to bacterial blight (X.oryzae). May act as positive regulator of basal defense. Probably required for SCF-mediated ubiquitination, by coupling HSP90 to SCF complex for ubiquitination of HSP90 client proteins. This is Protein SGT1 homolog from Oryza sativa subsp. japonica (Rice).